The sequence spans 306 residues: Beta-lactamase (306 aa).

An N-terminal signal peptide occupies residues 1–36; the sequence is MKLKTKASIKFGICVGLLCLSITGFTPFFNSTHAEA. The active-site Acyl-ester intermediate is the Ser89. Substrate is bound at residue 251–253; it reads KSG.

The protein belongs to the class-A beta-lactamase family.

It localises to the secreted. It carries out the reaction a beta-lactam + H2O = a substituted beta-amino acid. Functionally, this protein is a beta-lactamase with a substrate specificity for penicillins. This is Beta-lactamase (penP) from Bacillus subtilis (strain 168).